The sequence spans 217 residues: MEDKFEIGRIIRAKNISDAWYRGLNIIWNHGQVITDERGSQIREFMDLMVVIENPYTDRIPEDTAWNEERLEEYAKQLISGENAQDFEYTYGQRLRNWNEEVDQIEYVIEKLQESPTSRRATAVTWIPPVDTKVNEVPCMILDDFKIRDGKVHLTTLFRSHDFGGAYPANLYGLSKLLEYVAGRVGVEPGMITTVSISAHVYDHDWDMVENIVKGIN.

Cys-139 is an active-site residue.

It belongs to the thymidylate synthase family. Archaeal-type ThyA subfamily. Monomer.

It localises to the cytoplasm. It functions in the pathway pyrimidine metabolism; dTTP biosynthesis. In terms of biological role, may catalyze the biosynthesis of dTMP using an unknown cosubstrate. This is Putative thymidylate synthase from Methanosarcina acetivorans (strain ATCC 35395 / DSM 2834 / JCM 12185 / C2A).